A 435-amino-acid chain; its full sequence is Serine hydroxymethyltransferase (435 aa).

(6S)-5,6,7,8-tetrahydrofolate contacts are provided by residues leucine 133 and 137–139; that span reads GHL. An N6-(pyridoxal phosphate)lysine modification is found at lysine 242.

This sequence belongs to the SHMT family. In terms of assembly, homodimer. Requires pyridoxal 5'-phosphate as cofactor.

The protein localises to the cytoplasm. It carries out the reaction (6R)-5,10-methylene-5,6,7,8-tetrahydrofolate + glycine + H2O = (6S)-5,6,7,8-tetrahydrofolate + L-serine. It participates in one-carbon metabolism; tetrahydrofolate interconversion. It functions in the pathway amino-acid biosynthesis; glycine biosynthesis; glycine from L-serine: step 1/1. Its function is as follows. Catalyzes the reversible interconversion of serine and glycine with tetrahydrofolate (THF) serving as the one-carbon carrier. This reaction serves as the major source of one-carbon groups required for the biosynthesis of purines, thymidylate, methionine, and other important biomolecules. Also exhibits THF-independent aldolase activity toward beta-hydroxyamino acids, producing glycine and aldehydes, via a retro-aldol mechanism. The chain is Serine hydroxymethyltransferase from Hyphomonas neptunium (strain ATCC 15444).